Here is a 651-residue protein sequence, read N- to C-terminus: MSLPRLLKVNIRTYDNSIPISESSRKSWNQKHFALTFPKPLQRGTNDKSRPLKSQITVTRHDKRKLEEGQKPAHKWIRHSFRKILQWPPIYTAAREQTPFRHLYTSKTHLKKAEYKKSKDEKGGTPLKKDSKKKGGSYATNPESKQIVEEKTKRQNEADKTPLKSSHENEQSKKSKSSSETNPESQNSKTVSKNCSQKDKKDSKNSKKTNTEFLHTKNNPKKDLKRSKTSNDPISEICSENSLNVDFLMLVGQSDDESINFDAWLRNYSQNNSKNYSLKYTKYTKKDTKKNAKKSSDAESEDSKDAKKDSKKVKKNVKKDDKKKDVKKDTESTDAESGDSKDERKDTKKDKKKLKKDDKKKDTKKYPESTDTESGDAKDARNDSRNLKKASKNDDKKKDAKKITFSTDSESELESKESQKDEKKDKKDSKTDNKKSVKNDEESTDADSEPKGDSKKGKKDEKKGKKDSKKDDKKKDAKKNAESTEMESDLELKKDKKHSKEKKGSKKDIKKDARKDTESTDAEFDESSKTGFKTSTKIKGSDTESEESLYKPGAKKKIDESDGTSANSKMEGLESKRGFRMSSKKTTFNEKGEKASTGRVPPSREKPPLPACEPSLPSPKVRRLCWCKMPPPPPKPRYAPLPEAPWIHKLL.

Disordered regions lie at residues 110–241 (LKKA…CSEN) and 267–615 (NYSQ…CEPS). Composition is skewed to basic and acidic residues over residues 111–129 (KKAE…PLKK) and 146–173 (QIVE…EQSK). Residues 186-195 (QNSKTVSKNC) show a composition bias toward polar residues. Residues 196-205 (SQKDKKDSKN) show a composition bias toward basic and acidic residues. The segment covering 230–241 (SNDPISEICSEN) has biased composition (polar residues). Residues 271 to 281 (NNSKNYSLKYT) show a composition bias toward low complexity. 8 consecutive repeat copies span residues 278–305 (LKYT…DSKD), 306–342 (AKKD…DSKD), 343–379 (ERKD…DAKD), 380–417 (ARND…ESKE), 418–453 (SQKD…PKGD), 454–491 (SKKG…SDLE), 492–531 (LKKD…SKTG), and 532–553 (FKTS…YKPG). Composition is skewed to basic and acidic residues over residues 284-308 (TKKD…DAKK), 318-331 (KKDD…KDTE), 338-368 (GDSK…KYPE), 375-402 (GDAK…DAKK), 413-441 (LESK…KNDE), and 448-482 (SEPK…KNAE). The segment covering 495-505 (DKKHSKEKKGS) has biased composition (basic residues). Positions 506–518 (KKDIKKDARKDTE) are enriched in basic and acidic residues. Over residues 529-538 (KTGFKTSTKI) the composition is skewed to polar residues. Positions 532–553 (FKTSTKIKGSDTESEESLYKPG) are 8 X approximate tandem repeats. A compositionally biased stretch (basic and acidic residues) spans 587–607 (TFNEKGEKASTGRVPPSREKP).

In terms of assembly, interacts with proteins of spermatozoa head including ACTL7A, CCIN, FAM209A and SPACA1; the interactions may be necessary for proper acrosome attachment to the nuclear envelope. Testis.

It localises to the cytoplasm. It is found in the cytoskeleton. The protein resides in the perinuclear theca. Its subcellular location is the calyx. Plays a role in the establishment of normal sperm morphology during spermatogenesis and is required for acrosome attachment to the nuclear envelope. In Homo sapiens (Human), this protein is Cylicin-1 (CYLC1).